The following is a 268-amino-acid chain: Purine nucleoside phosphorylase (268 aa).

Phosphate is bound by residues Ser-36, His-68, 88–90 (RIH), and Ala-120. Residue Glu-189 coordinates a purine D-ribonucleoside. Ser-208 serves as a coordination point for phosphate. Asn-231 contacts a purine D-ribonucleoside.

This sequence belongs to the PNP/MTAP phosphorylase family. In terms of assembly, homotrimer.

It carries out the reaction a purine 2'-deoxy-D-ribonucleoside + phosphate = a purine nucleobase + 2-deoxy-alpha-D-ribose 1-phosphate. The protein operates within purine metabolism; purine nucleoside salvage. Functionally, the purine nucleoside phosphorylases catalyze the phosphorolytic breakdown of the N-glycosidic bond in the beta-(deoxy)ribonucleoside molecules, with the formation of the corresponding free purine bases and pentose-1-phosphate. Cleaves guanosine, inosine, 2'-deoxyguanosine and 2'-deoxyinosine. In Mycobacterium leprae (strain TN), this protein is Purine nucleoside phosphorylase (punA).